The primary structure comprises 141 residues: Alpha-lactalbumin (141 aa).

The signal sequence occupies residues 1-19 (MMPLVPLLLVSIVFPGIQA). Residues 20-141 (TQLTRCELTE…ENLEQWVCKK (122 aa)) form the C-type lysozyme domain. Cystine bridges form between Cys-25–Cys-139, Cys-47–Cys-130, Cys-80–Cys-96, and Cys-92–Cys-110. N-linked (GlcNAc...) asparagine glycosylation is present at Asn-64. Residues Asp-101, Asp-106, and Asp-107 each coordinate Ca(2+).

This sequence belongs to the glycosyl hydrolase 22 family. Lactose synthase (LS) is a heterodimer of a catalytic component, beta1,4-galactosyltransferase (beta4Gal-T1) and a regulatory component, alpha-lactalbumin (LA). Mammary gland specific. Secreted in milk.

It is found in the secreted. Its function is as follows. Regulatory subunit of lactose synthase, changes the substrate specificity of galactosyltransferase in the mammary gland making glucose a good acceptor substrate for this enzyme. This enables LS to synthesize lactose, the major carbohydrate component of milk. In other tissues, galactosyltransferase transfers galactose onto the N-acetylglucosamine of the oligosaccharide chains in glycoproteins. This Oryctolagus cuniculus (Rabbit) protein is Alpha-lactalbumin (LALBA).